Here is a 231-residue protein sequence, read N- to C-terminus: MNKQRGTFSEVSLAQDPKRQQRKPKDNKSSISGTKQEIFQVELNLQNPSLNHQGIDQIYDCQGLLPPPEKLTAEVLGIICIVLMATVLKTVVLIPFLEQNNSFPNTRTQKVRHCGHCPEEWITYSNSCYYIGKEKRTWAESLLACTSKNSSLLSIDNEEEMKFLTAISPSTWTGVFRDSSHHPWVTINGLTFKHEIKDSDHAEYNCAMLHLDRLKSVQCGSSKRYYCKHKL.

The span at methionine 1 to serine 12 shows a compositional bias: polar residues. Residues methionine 1–isoleucine 31 form a disordered region. Over methionine 1 to lysine 70 the chain is Cytoplasmic. The span at aspartate 16–lysine 28 shows a compositional bias: basic and acidic residues. The helical; Signal-anchor for type II membrane protein transmembrane segment at leucine 71 to leucine 93 threads the bilayer. Residues isoleucine 94–leucine 231 are Extracellular-facing. The N-linked (GlcNAc...) asparagine glycan is linked to asparagine 100. A C-type lectin domain is found at histidine 116–histidine 229. 3 cysteine pairs are disulfide-bonded: cysteine 117/cysteine 128, cysteine 145/cysteine 227, and cysteine 206/cysteine 219. N-linked (GlcNAc...) asparagine glycosylation is present at asparagine 149.

In terms of assembly, heterodimer with KLRD1; disulfide-linked. KLRD1-KLRC2 receptor complex interacts with TYROBP/DAP12 homodimer; this interaction is necessary for the expression on the cell surface. As to expression, natural killer cells.

It localises to the cell membrane. In terms of biological role, immune activating receptor involved in self-nonself discrimination. In complex with KLRD1 on cytotoxic lymphocyte subsets, recognizes non-classical major histocompatibility MHC-E loaded with signal sequence-derived peptides from non-classical MHC-G molecules, likely playing a role in the generation and effector functions of adaptive natural killer (NK) cells and in maternal-fetal tolerance during pregnancy. Regulates the effector functions of terminally differentiated cytotoxic lymphocyte subsets, and in particular may play a role in adaptive NK cell response to viral infection. Upon MHC-E-peptide binding, transmits intracellular signals via the adapter protein TYROBP/DAP12, triggering the phosphorylation of proximal signaling molecules and cell activation. The sequence is that of NKG2-C type II integral membrane protein (KLRC2) from Macaca mulatta (Rhesus macaque).